The sequence spans 61 residues: Large ribosomal subunit protein bL28 (61 aa).

The segment at 1-21 is disordered; sequence MAKDYVTGKKTTFGNKRSHAM.

It belongs to the bacterial ribosomal protein bL28 family.

The sequence is that of Large ribosomal subunit protein bL28 from Lactobacillus helveticus (strain DPC 4571).